The sequence spans 350 residues: Atypical chemokine receptor 4 (350 aa).

The Extracellular segment spans residues 1–42 (MALEQNQSTDYYYEENEMNGTYDYSQYELICIKEDVREFAKV). Asparagine 6 and asparagine 19 each carry an N-linked (GlcNAc...) asparagine glycan. The helical transmembrane segment at 43–63 (FLPVFLTIVFVIGLAGNSMVV) threads the bilayer. The Cytoplasmic portion of the chain corresponds to 64-87 (AIYAYYKKQRTKTDVYILNLAVAD). The chain crosses the membrane as a helical span at residues 88–108 (LLLLFTLPFWAVNAVHGWVLG). At 109 to 113 (KIMCK) the chain is on the extracellular side. Cysteine 112 and cysteine 184 are disulfide-bonded. The helical transmembrane segment at 114 to 134 (ITSALYTLNFVSGMQFLACIS) threads the bilayer. Residues 135 to 154 (IDRYVAVTKVPSQSGVGKPC) are Cytoplasmic-facing. A helical transmembrane segment spans residues 155–175 (WIICFCVWMAAILLSIPQLVF). At 176 to 201 (YTVNDNARCIPIFPRYLGTSMKALIQ) the chain is on the extracellular side. A helical membrane pass occupies residues 202-222 (MLEICIGFVVPFLIMGVCYFI). The Cytoplasmic portion of the chain corresponds to 223–240 (TARTLMKMPNIKISRPLK). Residues 241–261 (VLLTVVIVFIVTQLPYNIVKF) form a helical membrane-spanning segment. At 262–289 (CRAIDIIYSLITSCNMSKRMDIAIQVTE) the chain is on the extracellular side. Residues 290-310 (SIALFHSCLNPILYVFMGASF) form a helical membrane-spanning segment. Residues 311–350 (KNYVMKVAKKYGSWRRQRQSVEEFPFDSEGPTEPTSTFSI) lie on the Cytoplasmic side of the membrane.

The protein belongs to the G-protein coupled receptor 1 family. Atypical chemokine receptor subfamily. In terms of assembly, forms heteromers with CXCR3. Interacts with ARRB1 and ARRB2. In terms of processing, the Ser/Thr residues in the C-terminal cytoplasmic tail may be phosphorylated. Predominantly expressed in heart. Lower expression in lung, pancreas, spleen, colon, skeletal muscle and small intestine.

Its subcellular location is the early endosome. The protein localises to the recycling endosome. It is found in the cell membrane. Functionally, atypical chemokine receptor that controls chemokine levels and localization via high-affinity chemokine binding that is uncoupled from classic ligand-driven signal transduction cascades, resulting instead in chemokine sequestration, degradation, or transcytosis. Also known as interceptor (internalizing receptor) or chemokine-scavenging receptor or chemokine decoy receptor. Acts as a receptor for chemokines CCL2, CCL8, CCL13, CCL19, CCL21 and CCL25. Chemokine-binding does not activate G-protein-mediated signal transduction but instead induces beta-arrestin recruitment, leading to ligand internalization. Plays an important role in controlling the migration of immune and cancer cells that express chemokine receptors CCR7 and CCR9, by reducing the availability of CCL19, CCL21, and CCL25 through internalization. Negatively regulates CXCR3-induced chemotaxis. Regulates T-cell development in the thymus. This Homo sapiens (Human) protein is Atypical chemokine receptor 4 (ACKR4).